The chain runs to 93 residues: Small ribosomal subunit protein uS19 (93 aa).

This sequence belongs to the universal ribosomal protein uS19 family.

Protein S19 forms a complex with S13 that binds strongly to the 16S ribosomal RNA. The sequence is that of Small ribosomal subunit protein uS19 from Campylobacter lari (strain RM2100 / D67 / ATCC BAA-1060).